We begin with the raw amino-acid sequence, 850 residues long: Pre-mRNA-splicing factor SYF1 (850 aa).

HAT repeat units follow at residues 25-57, 58-90, 100-132, 134-168, 171-203, 281-316, 477-509, 511-543, 545-579, 584-618, and 692-726; these read IQPS…FKQG, SPQK…ERTL, NSFE…FLMI, EKIT…FILK, IPSL…KIKE, AQFE…FEDS, KKQN…LEES, GTFH…YLEE, KYFE…KFIQ, MKLE…FEEQ, and GEID…FEKL. Basic and acidic residues predominate over residues 761 to 771; sequence NNKDDKDDKNQ. Positions 761–837 are disordered; sequence NNKDDKDDKN…EEEEEEEDQL (77 aa). The segment covering 772-792 has biased composition (low complexity); it reads QQKQQQQQQEKQQQQQQQQQQ. Polar residues predominate over residues 793–812; that stretch reads ASTLTKSKPVTVSLPETIQY. The span at 818 to 836 shows a compositional bias: acidic residues; sequence NDDEINLDDDEEEEEEEDQ.

Belongs to the crooked-neck family. As to quaternary structure, identified in the spliceosome C complex.

The protein resides in the nucleus. Its function is as follows. Involved in pre-mRNA splicing as component of the spliceosome. Involved in transcription-coupled repair (TCR), transcription and pre-mRNA splicing. The sequence is that of Pre-mRNA-splicing factor SYF1 (xab2) from Dictyostelium discoideum (Social amoeba).